The following is a 107-amino-acid chain: L-rhamnose mutarotase (107 aa).

Tyrosine 21 lines the substrate pocket. The Proton donor role is filled by histidine 25. Residues tyrosine 44 and 79–80 (WW) contribute to the substrate site.

Belongs to the rhamnose mutarotase family. Homodimer.

It is found in the cytoplasm. The enzyme catalyses alpha-L-rhamnose = beta-L-rhamnose. It participates in carbohydrate metabolism; L-rhamnose metabolism. In terms of biological role, involved in the anomeric conversion of L-rhamnose. The sequence is that of L-rhamnose mutarotase from Agrobacterium fabrum (strain C58 / ATCC 33970) (Agrobacterium tumefaciens (strain C58)).